We begin with the raw amino-acid sequence, 64 residues long: Bactridin-2 (64 aa).

In terms of domain architecture, LCN-type CS-alpha/beta spans 1 to 63 (KDGYLVGNDG…TWNRATNRCG (63 aa)). 4 disulfides stabilise this stretch: cysteine 11–cysteine 62, cysteine 15–cysteine 37, cysteine 23–cysteine 43, and cysteine 27–cysteine 45.

The protein belongs to the long (4 C-C) scorpion toxin superfamily. Sodium channel inhibitor family. Beta subfamily. In terms of tissue distribution, expressed by the venom gland.

Its subcellular location is the secreted. Its function is as follows. Shows antibacterial activity against both Gram-positive bacteria (B.subtilis, M.luteus, E.faecalis) and Gram-negative bacteria (P.aeruginosa, Y.enterocolitica, A.calcoaceticus). Modifies membrane sodium permeability on Y.enterocolitica. Is toxic to mice, but is not to crabs. Induces concentration dependent haemolysis in human erythrocytes. Acts by inhibiting the sodium (Nav) currents. The polypeptide is Bactridin-2 (Tityus discrepans (Venezuelan scorpion)).